Consider the following 377-residue polypeptide: tRNA(Met) cytidine acetate ligase (377 aa).

Residues 7-20 (ITEY…HLFH), G100, N153, and R178 contribute to the ATP site.

It belongs to the TmcAL family.

Its subcellular location is the cytoplasm. The enzyme catalyses cytidine(34) in elongator tRNA(Met) + acetate + ATP = N(4)-acetylcytidine(34) in elongator tRNA(Met) + AMP + diphosphate. In terms of biological role, catalyzes the formation of N(4)-acetylcytidine (ac(4)C) at the wobble position of elongator tRNA(Met), using acetate and ATP as substrates. First activates an acetate ion to form acetyladenylate (Ac-AMP) and then transfers the acetyl group to tRNA to form ac(4)C34. This is tRNA(Met) cytidine acetate ligase from Staphylococcus epidermidis (strain ATCC 12228 / FDA PCI 1200).